The sequence spans 317 residues: Adenosine receptor A3 (317 aa).

Residues 1–14 (MPVNSTAVSWTSVT) are Extracellular-facing. N-linked (GlcNAc...) asparagine glycosylation is present at Asn4. The helical transmembrane segment at 15-37 (YITVEILIGLCAIVGNVLVIWVV) threads the bilayer. Topologically, residues 38-48 (KLNPSLQTTTF) are cytoplasmic. The helical transmembrane segment at 49–72 (YFIVSLALADIAVGVLVMPLAIVI) threads the bilayer. Residues 73-84 (SLGVTIHFYSCL) lie on the Extracellular side of the membrane. Cys83 and Cys165 are disulfide-bonded. A helical transmembrane segment spans residues 85–106 (FMTCLMLIFTHASIMSLLAIAV). Topologically, residues 107-126 (DRYLRVKLTVRYRRVTTQRR) are cytoplasmic. A helical membrane pass occupies residues 127–148 (IWLALGLCWLVSFLVGLTPMFG). The Extracellular portion of the chain corresponds to 149–176 (WNMKLSSADENLTFLPCRFRSVMRMDYM). Asn159 carries an N-linked (GlcNAc...) asparagine glycan. A helical membrane pass occupies residues 177–197 (VYFSFFLWILVPLVVMCAIYF). Residues 198-230 (DIFYIIRNRLSQSFSGSRETGAFYGREFKTAKS) lie on the Cytoplasmic side of the membrane. The chain crosses the membrane as a helical span at residues 231 to 254 (LLLVLFLFALCWLPLSIINCILYF). The Extracellular segment spans residues 255–260 (DGQVPQ). The helical transmembrane segment at 261–283 (TVLYLGILLSHANSMMNPIVYAY) threads the bilayer. Residues 284 to 317 (KIKKFKETYLLILKACVMCQPSKSMDPSTEQTSE) lie on the Cytoplasmic side of the membrane. Cys302 carries the S-palmitoyl cysteine lipid modification.

This sequence belongs to the G-protein coupled receptor 1 family. In terms of processing, phosphorylation on Thr-315 and Ser-316 may be crucial for rapid desensitization. Phosphorylation on Thr-315 may be necessary for phosphorylation on Ser-316 to occur. As to expression, most abundant in lung, spleen and pineal gland. Moderate expression in brain, kidney and testis.

Its subcellular location is the cell membrane. In terms of biological role, receptor for adenosine. The activity of this receptor is mediated by G proteins which inhibits adenylyl cyclase. The sequence is that of Adenosine receptor A3 (ADORA3) from Ovis aries (Sheep).